We begin with the raw amino-acid sequence, 436 residues long: GTPase Der (436 aa).

EngA-type G domains lie at 4–167 (PVVA…PKEE) and 176–351 (VKFS…DNHS). Residues 10–17 (GRPNVGKS), 57–61 (DTGGI), 119–122 (NKVD), 182–189 (GRPNVGKS), 229–233 (DTAGM), and 294–297 (NKWD) each bind GTP. The 85-residue stretch at 352-436 (LRVQSSMLND…PIRVIARKRK (85 aa)) folds into the KH-like domain.

The protein belongs to the TRAFAC class TrmE-Era-EngA-EngB-Septin-like GTPase superfamily. EngA (Der) GTPase family. In terms of assembly, associates with the 50S ribosomal subunit.

GTPase that plays an essential role in the late steps of ribosome biogenesis. The polypeptide is GTPase Der (Listeria monocytogenes serotype 4b (strain F2365)).